The chain runs to 321 residues: Non-canonical heme oxygenase HOZ, chloroplastic (321 aa).

Residues 1–45 constitute a chloroplast transit peptide; it reads MKSLVAHFSTPLITARLVPRCIIHRASISAVSFSTVRRRFSPLTM. The dimerization stretch occupies residues 96 to 116; the sequence is CGMLSTFSQKYEGYPSGSMVD. Residues Ser-130, Val-134, and His-135 each coordinate heme b. Dimerization regions lie at residues 144–166 and 205–208; these read KCSL…LHGD and KVVR.

Homodimer. Binds to heme in the interdimer interface; the heme iron is coordinated by a fixed water molecule.

Its subcellular location is the plastid. It localises to the chloroplast. Dimeric beta-barrel protein binding to heme and catalyzing its degradation to produce biliverdin. May function in the tetrapyrrole biosynthetic pathway. The chain is Non-canonical heme oxygenase HOZ, chloroplastic from Arabidopsis thaliana (Mouse-ear cress).